Consider the following 422-residue polypeptide: MLRLSRLPLPPVLQRLTGFSLFVWRRAMQNRCLQVAASLTFTTLLSLVPLITITLIVVAAFPVFEELSSQFKEFLLRNLVPDFAGRIISVYLKQFTDNAGRLTAVGLALLAFTSLSLMLTIDRTFNAIWQVQRPRKLLHNMLVYWTVLTLGPLLLGVGISGSAWILNWSGLARTAPGLAGIIQNLGSLTLATVMLTVLYGLVPNCYVPRWHALIGGALTALTLGVAQAGFGLYVEISRTYQFIYGAFATFPFLLIWLQLMWLTVLIGAELTASLSYWKGDVWRREGDSQRRFCDALDTLVRLSQAQVHGRALGQADLRHHIDTGYDEIGRILDELARLGLVQRSAEGLWALLYRPESVSLLRLWHHFVLDLNASPADDAISHSLTELVRPLEAGLDISLAEFLHRYPPAGPAVTLPAVPRPG.

6 consecutive transmembrane segments (helical) span residues 44–64, 102–122, 141–161, 178–198, 212–232, and 246–266; these read LLSLVPLITITLIVVAAFPVF, LTAVGLALLAFTSLSLMLTID, MLVYWTVLTLGPLLLGVGISG, LAGIIQNLGSLTLATVMLTVL, ALIGGALTALTLGVAQAGFGL, and AFATFPFLLIWLQLMWLTVLI.

This sequence belongs to the UPF0761 family.

Its subcellular location is the cell inner membrane. The protein is UPF0761 membrane protein LHK_02978 of Laribacter hongkongensis (strain HLHK9).